Reading from the N-terminus, the 436-residue chain is Magnesium transporter MRS2-B (436 aa).

Low complexity-rich tracts occupy residues 1 to 14 and 29 to 54; these read MSAA…GDSA and VASV…FPGG. Residues 1-60 are disordered; it reads MSAAAASSAAGDSAKQPLLHHQRGNPPHVASVSSPSLPSAPPGALAGGRRFPGGLDVPNL. Residues 176–242 adopt a coiled-coil conformation; it reads LALEAACSFL…RDEIEQLMDD (67 aa). Transmembrane regions (helical) follow at residues 372-392 and 408-428; these read LLLT…GIFG and WVLI…LWFF. Residues 392-394 carry the Required for magnesium transport activity motif; that stretch reads GMN.

It belongs to the CorA metal ion transporter (MIT) (TC 1.A.35.5) family.

The protein localises to the membrane. Its function is as follows. Magnesium transporter that may mediate the influx of magnesium. The sequence is that of Magnesium transporter MRS2-B (MRS2-B) from Oryza sativa subsp. indica (Rice).